A 935-amino-acid polypeptide reads, in one-letter code: Progesterone receptor (935 aa).

Residues 1–164 are AF3; mediates transcriptional activation; sequence MTELKAKGPR…PATQRVLSPL (164 aa). Positions 1-256 are disordered; sequence MTELKAKGPR…AAAGGGAAAV (256 aa). The segment at 1–568 is modulating, Pro-Rich; that stretch reads MTELKAKGPR…YSFESLPQKI (568 aa). A Phosphoserine modification is found at Ser-20. The LXXL motif 1 signature appears at 55 to 59; it reads LDGLL. Position 81 is a phosphoserine (Ser-81). An LXXL motif 2 motif is present at residues 115 to 119; it reads LDTLL. Phosphoserine is present on residues Ser-130 and Ser-162. The interval 165 to 305 is mediates transcriptional transrepression; sequence MSRSGGKAGD…LATTTMDFTH (141 aa). The short motif at 183-187 is the Nuclear localization signal element; the sequence is KVLPR. Ser-190 and Ser-213 each carry phosphoserine. Positions 220 to 231 are enriched in acidic residues; it reads EVEEEDGSESED. Residues 232-246 are compositionally biased toward low complexity; it reads SAGPLLKGKPRALGG. Ser-294 bears the Phosphoserine; by MAPK1 mark. The segment at 328–353 is disordered; the sequence is SYDGGAGAASAFAPPRSSPSASSTPV. Low complexity predominate over residues 335 to 350; the sequence is AASAFAPPRSSPSASS. Ser-345 bears the Phosphoserine; by MAPK mark. Residue Lys-388 forms a Glycyl lysine isopeptide (Lys-Gly) (interchain with G-Cter in SUMO); alternate linkage. Lys-388 participates in a covalent cross-link: Glycyl lysine isopeptide (Lys-Gly) (interchain with G-Cter in ubiquitin); alternate. Ser-400 bears the Phosphoserine; by CDK2 mark. A disordered region spans residues 415-452; it reads PDFPLGPPPPLPPRAPPSRPGEAAVTAAPAGASVSSAS. Pro residues predominate over residues 418-433; the sequence is PLGPPPPLPPRAPPSR. Low complexity predominate over residues 434-452; that stretch reads PGEAAVTAAPAGASVSSAS. Positions 456 to 548 are AF1; mediates transcriptional activation; sequence STLECILYKA…VYPPYLNYLR (93 aa). Lys-533 is covalently cross-linked (Glycyl lysine isopeptide (Lys-Gly) (interchain with G-Cter in SUMO)). NR C4-type zinc fingers lie at residues 569-589 and 605-629; these read CLIC…CGSC and CAGR…LRKC. Residues 569 to 641 constitute a DNA-binding region (nuclear receptor); it reads CLICGDEASG…AGMVLGGRKF (73 aa). At Ser-678 the chain carries Phosphoserine. The NR LBD domain occupies 681 to 915; the sequence is QDIQLIPPLI…EFPEMMSEVI (235 aa). An AF2; mediates transcriptional activation region spans residues 689–935; the sequence is LINLLVSIEP…MVKPLLFHKK (247 aa). Position 768 (Arg-768) interacts with progesterone.

Belongs to the nuclear hormone receptor family. Interacts with SMARD1 and UNC45A. Interacts with CUEDC2; the interaction promotes ubiquitination, decreases sumoylation, and represses transcriptional activity. Interacts with PIAS3; the interaction promotes sumoylation of PR in a hormone-dependent manner, inhibits DNA-binding, and alters nuclear export. Interacts with SP1; the interaction requires ligand-induced phosphorylation on Ser-345 by ERK1/2-MAPK. Interacts with PRMT2. Interacts with NCOA2 and NCOA1. Interacts with KLF9. Interacts with GTF2B. Post-translationally, phosphorylated on multiple serine sites. Several of these sites are hormone-dependent. Phosphorylation on Ser-294 is highly hormone-dependent and modulates ubiquitination and sumoylation on Lys-388. Phosphorylation on Ser-345 also requires induction by hormone. Basal phosphorylation on Ser-81, Ser-162, Ser-190 and Ser-400 is increased in response to progesterone and can be phosphorylated in vitro by the CDK2-A1 complex. Increased levels of phosphorylation on Ser-400 also in the presence of EGF, heregulin, IGF, PMA and FBS. Phosphorylation at this site by CDK2 is ligand-independent, and increases nuclear translocation and transcriptional activity. Phosphorylation at Ser-162 and Ser-294, but not at Ser-190, is impaired during the G(2)/M phase of the cell cycle. Phosphorylation on Ser-345 by ERK1/2 MAPK is required for interaction with SP1. In terms of processing, sumoylation is hormone-dependent and represses transcriptional activity. Sumoylation on all three sites is enhanced by PIAS3. Desumoylated by SENP1. Sumoylation on Lys-388, the main site of sumoylation, is repressed by ubiquitination on the same site, and modulated by phosphorylation at Ser-294. Ubiquitination is hormone-dependent and represses sumoylation on the same site. Promoted by MAPK-mediated phosphorylation on Ser-294. Ubiquitinated by UBR5, leading to its degradation: UBR5 specifically recognizes and binds ligand-bound PGR when it is not associated with coactivators (NCOAs). In presence of NCOAs, the UBR5-degron is not accessible, preventing its ubiquitination and degradation. Post-translationally, palmitoylated by ZDHHC7 and ZDHHC21. Palmitoylation is required for plasma membrane targeting and for rapid intracellular signaling via ERK and AKT kinases and cAMP generation.

The protein localises to the nucleus. The protein resides in the cytoplasm. The steroid hormones and their receptors are involved in the regulation of eukaryotic gene expression and affect cellular proliferation and differentiation in target tissues. Transcriptional activator of several progesteron-dependent promoters in a variety of cell types. Involved in activation of SRC-dependent MAPK signaling on hormone stimulation. The sequence is that of Progesterone receptor (PGR) from Macaca sylvanus (Barbary macaque).